Consider the following 887-residue polypeptide: Alanine--tRNA ligase (887 aa).

Zn(2+)-binding residues include His581, His585, Cys683, and His687.

This sequence belongs to the class-II aminoacyl-tRNA synthetase family. It depends on Zn(2+) as a cofactor.

Its subcellular location is the cytoplasm. It catalyses the reaction tRNA(Ala) + L-alanine + ATP = L-alanyl-tRNA(Ala) + AMP + diphosphate. Functionally, catalyzes the attachment of alanine to tRNA(Ala) in a two-step reaction: alanine is first activated by ATP to form Ala-AMP and then transferred to the acceptor end of tRNA(Ala). Also edits incorrectly charged Ser-tRNA(Ala) and Gly-tRNA(Ala) via its editing domain. This is Alanine--tRNA ligase from Ehrlichia ruminantium (strain Welgevonden).